The chain runs to 230 residues: uncharacterized protein (230 aa).

This is an uncharacterized protein from Mycobacterium tuberculosis (strain ATCC 25618 / H37Rv).